Here is a 331-residue protein sequence, read N- to C-terminus: Anthranilate phosphoribosyltransferase (331 aa).

Residues glycine 78, 81-82, threonine 86, 88-91, 106-114, and serine 118 each bind 5-phospho-alpha-D-ribose 1-diphosphate; these read GD, NVST, and KHGNYSVSS. Glycine 78 serves as a coordination point for anthranilate. Residue serine 90 coordinates Mg(2+). Asparagine 109 contacts anthranilate. Arginine 164 is a binding site for anthranilate. The Mg(2+) site is built by aspartate 222 and glutamate 223.

The protein belongs to the anthranilate phosphoribosyltransferase family. As to quaternary structure, homodimer. Requires Mg(2+) as cofactor.

The catalysed reaction is N-(5-phospho-beta-D-ribosyl)anthranilate + diphosphate = 5-phospho-alpha-D-ribose 1-diphosphate + anthranilate. Its pathway is amino-acid biosynthesis; L-tryptophan biosynthesis; L-tryptophan from chorismate: step 2/5. In terms of biological role, catalyzes the transfer of the phosphoribosyl group of 5-phosphorylribose-1-pyrophosphate (PRPP) to anthranilate to yield N-(5'-phosphoribosyl)-anthranilate (PRA). This is Anthranilate phosphoribosyltransferase from Haloarcula marismortui (strain ATCC 43049 / DSM 3752 / JCM 8966 / VKM B-1809) (Halobacterium marismortui).